Here is a 144-residue protein sequence, read N- to C-terminus: Large ribosomal subunit protein uL15 (144 aa).

The interval methionine 1–proline 56 is disordered. Gly residues predominate over residues arginine 21–alanine 31.

The protein belongs to the universal ribosomal protein uL15 family. In terms of assembly, part of the 50S ribosomal subunit.

Binds to the 23S rRNA. The polypeptide is Large ribosomal subunit protein uL15 (Burkholderia ambifaria (strain MC40-6)).